Consider the following 581-residue polypeptide: Kelch-like protein 38 (581 aa).

The 68-residue stretch at 34 to 101 (TDVSICAGAR…VYTGEAHIAT (68 aa)) folds into the BTB domain. Residues 136-237 (CLGMIRLSEI…HPAFFHHFIA (102 aa)) form the BACK domain. Kelch repeat units lie at residues 285-332 (FLIL…TLHR), 334-383 (IYVL…AHKN), 384-431 (FIFS…VKDQ), 433-479 (LYLF…VLGE), 480-521 (RIVI…VMGN), and 523-573 (LYVT…TLQC).

The polypeptide is Kelch-like protein 38 (KLHL38) (Homo sapiens (Human)).